Consider the following 100-residue polypeptide: Large ribosomal subunit protein bL21 (100 aa).

Belongs to the bacterial ribosomal protein bL21 family. Part of the 50S ribosomal subunit. Contacts protein L20.

Functionally, this protein binds to 23S rRNA in the presence of protein L20. This chain is Large ribosomal subunit protein bL21, found in Wolbachia sp. subsp. Drosophila simulans (strain wRi).